The following is a 1023-amino-acid chain: Solute carrier family 12 member 3 (1023 aa).

The Cytoplasmic segment spans residues 1 to 134 (MELPGDGVHL…EPPPEPPRFG (134 aa)). Residues 91–131 (DPEQDDFKPPMYEETAGERMGGGDSSEEEEEEHKEPPPEPP) are disordered. Residues 135–164 (WVQGVMIRCMLNIWGVILYLRLPWITAQAG) form a discontinuously helical membrane-spanning segment. Leu145 and Trp148 together coordinate Na(+). Residues 165-186 (IGLTWVIILLSSFITGITGLST) traverse the membrane as a helical segment. The Cytoplasmic portion of the chain corresponds to 187-217 (SAIATNGKVKGGGTYFLISRSLGPELGGSIG). A helical membrane pass occupies residues 218–240 (LIFAFANAVAVAMHTVGFAETVT). Residues 241–252 (DLMRENGVVMVD) lie on the Extracellular side of the membrane. 2 helical membrane passes run 253–277 (PIND…AGME) and 278–300 (WESK…YIVG). Topologically, residues 301-335 (TIIPASPQKQAKGFFSYKAEIFAANFVPGWRGKEG) are extracellular. A discontinuously helical transmembrane segment spans residues 336-357 (SFFGMFSIFFPSATGILAGANI). 3 residues coordinate chloride: Gly350, Ile351, and Leu352. At 358 to 368 (SGDLKDPTVAI) the chain is on the cytoplasmic side. A helical transmembrane segment spans residues 369–390 (PRGTLMAIFWTTISYLIISATI). Over 391 to 452 (GACVVRDASG…YQSMSLVSAF (62 aa)) the chain is Extracellular. Asn403 and Asn414 each carry an N-linked (GlcNAc...) asparagine glycan. Cystine bridges form between Cys415–Cys420 and Cys429–Cys435. An N-linked (GlcNAc...) asparagine glycan is attached at Asn432. The helical transmembrane segment at 453 to 476 (APLISAGIFGATLSSALACLVSAP) threads the bilayer. Positions 463, 466, and 467 each coordinate Na(+). Residues 477-506 (KVFQCLCKDQLYPLIGFFGKGYGKNAEPLR) are Cytoplasmic-facing. The chain crosses the membrane as a helical span at residues 507–521 (AYLLTYVIAVCFVLI). Residues 522–526 (AELNT) lie on the Extracellular side of the membrane. The helical transmembrane segment at 527–543 (IAPIISNFFLCSYALIN) threads the bilayer. Tyr539 serves as a coordination point for chloride. At 544–566 (FSCFHASVTNSPGWRPSFRFYSK) the chain is on the cytoplasmic side. 2 helical membrane passes run 567-586 (WLSL…LTWW) and 587-598 (AALIAFGVVFFL). The Cytoplasmic segment spans residues 599-1023 (LGYTLYKKPA…QENVLTFYCQ (425 aa)). The interval 614–629 (SVQASSYSMALNQCVG) is scissor helix. 5 residues coordinate ATP: Leu647, Arg654, Val676, Gly733, and Leu772.

The protein belongs to the SLC12A transporter family. Homodimer; adopts a domain-swap conformation at the scissor helices connecting the transmembrane domain and C-terminal domain. Expressed in urinary bladder, intestine, ovary, skeletal muscle, eye, brain, and kidney.

The protein resides in the cell membrane. The catalysed reaction is chloride(out) + Na(+)(out) = chloride(in) + Na(+)(in). Its activity is regulated as follows. Inhibited by thiazide-type diuretics including polythiazide, metolazone, cyclothiazide, hydrochlorothiazide and chlorthalidone. Thiazide drugs, specifically inhibit SLC12A3/NCC transporter activity by competing with chloride for binding. Its function is as follows. Electroneutral sodium and chloride ion cotransporter, with a coupling ratio 1 Na(+):1 Cl(-). Mediates sodium and chloride reabsorption. The sequence is that of Solute carrier family 12 member 3 (slc12a3) from Pseudopleuronectes americanus (Winter flounder).